The primary structure comprises 237 residues: Leucyl/phenylalanyl-tRNA--protein transferase (237 aa).

It belongs to the L/F-transferase family.

The protein resides in the cytoplasm. The enzyme catalyses N-terminal L-lysyl-[protein] + L-leucyl-tRNA(Leu) = N-terminal L-leucyl-L-lysyl-[protein] + tRNA(Leu) + H(+). The catalysed reaction is N-terminal L-arginyl-[protein] + L-leucyl-tRNA(Leu) = N-terminal L-leucyl-L-arginyl-[protein] + tRNA(Leu) + H(+). It carries out the reaction L-phenylalanyl-tRNA(Phe) + an N-terminal L-alpha-aminoacyl-[protein] = an N-terminal L-phenylalanyl-L-alpha-aminoacyl-[protein] + tRNA(Phe). Functionally, functions in the N-end rule pathway of protein degradation where it conjugates Leu, Phe and, less efficiently, Met from aminoacyl-tRNAs to the N-termini of proteins containing an N-terminal arginine or lysine. This is Leucyl/phenylalanyl-tRNA--protein transferase from Shewanella baltica (strain OS195).